A 1168-amino-acid chain; its full sequence is MTILTTLIKEDNHFQDLNQVFGQANTLVTGLSPSAKVTMIAEKYAQSNQQLLLITNNLYQADKLETDLLQFIDAEELYKYPVQDIMTEEFSTQSPQLMSERIRTLTALAQGKKGLFIVPLNGLKKWLTPVEMWQNHQMTLRVGEDIDVDQFLNKLVNMGYKRESVVSHIGEFSLRGGIIDIFPLIGEPIRIELFDTEIDSIRDFDVETQRSKDNVEEVDITTASDYIITEEVISHLKEELKTAYENTRPKIDKSVRNDLKETYESFKLFESTYFDHQILRRLVAFMYETPSTIIEYFQKDAIIAVDEFNRIKETEESLTVESDSFISNIIESGNGFIGQSFIKYDDFETLIEGYPVTYFSLFATTMPIKLNHIIKFSCKPVQQFYGQYDIMRSEFQRYVNQNYHIVVLVETETKVERMQAMLSEMHIPSITKLHRSMSSGQAVIIEGSLSEGFELPDMGLVVITERELFKSKQKKQRKRTKAISNAEKIKSYQDLNVGDYIVHVHHGVGRYLGVETLEVGQTHRDYIKLQYKGTDQLFVPVDQMDQVQKYVASEDKTPKLNKLGGSEWKKTKAKVQQSVEDIAEELIDLYKEREMAEGYQYGEDTAEQTTFELDFPYELTPDQAKSIDEIKDDMQKSRPMDRLLCGDVGYGKTEVAVRAAFKAVMEGKQVAFLVPTTILAQQHYETLIERMQDFPVEIQLMSRFRTPKEIKQTKEGLKTGFVDIVVGTHKLLSKDIQYKDLGLLIVDEEQRFGVRHKERIKTLKHNVDVLTLTATPIPRTLHMSMLGVRDLSVIETPPENRFPVQTYVLEQNMSFIKEALERELSRDGQVFYLYNKVQSIYEKREQLQMLMPDANIAVAHGQMTERDLEETMLSFINNEYDILVTTTIIETGVDVPNANTLIIEDADRFGLSQLYQLRGRVGRSSRIGYAYFLHPANKVLTETAEDRLQAIKEFTELGSGFKIAMRDLNIRGAGNLLGKQQHGFIDTVGFDLYSQMLEEAVNEKRGIKEPESEVPEVEVDLNLDAYLPTEYIANEQAKIEIYKKLRKTETFDQIIDIKDELIDRFNDYPVEVARLLDIVEIKVHALHSGITLIKDKGKIIDIHLSVKATENIDGEVLFKATQPLGRTMKVGVQNNAMTITLTKQNQWLDSLKFLVKCIEESMRISDEA.

Residues 633-794 (DMQKSRPMDR…MLGVRDLSVI (162 aa)) form the Helicase ATP-binding domain. Residue 646–653 (GDVGYGKT) coordinates ATP. The DEEQ box signature appears at 747-750 (DEEQ). In terms of domain architecture, Helicase C-terminal spans 808-969 (VLEQNMSFIK…GFKIAMRDLN (162 aa)).

In the N-terminal section; belongs to the UvrB family. The protein in the C-terminal section; belongs to the helicase family. RecG subfamily.

The protein resides in the cytoplasm. In terms of biological role, couples transcription and DNA repair by recognizing RNA polymerase (RNAP) stalled at DNA lesions. Mediates ATP-dependent release of RNAP and its truncated transcript from the DNA, and recruitment of nucleotide excision repair machinery to the damaged site. In Staphylococcus aureus (strain USA300), this protein is Transcription-repair-coupling factor.